A 133-amino-acid chain; its full sequence is Small ribosomal subunit protein uS11 (133 aa).

The protein belongs to the universal ribosomal protein uS11 family. Part of the 30S ribosomal subunit. Interacts with proteins S7 and S18. Binds to IF-3.

Functionally, located on the platform of the 30S subunit, it bridges several disparate RNA helices of the 16S rRNA. Forms part of the Shine-Dalgarno cleft in the 70S ribosome. The polypeptide is Small ribosomal subunit protein uS11 (Bordetella petrii (strain ATCC BAA-461 / DSM 12804 / CCUG 43448)).